We begin with the raw amino-acid sequence, 412 residues long: BSD domain-containing protein 1 (412 aa).

The BSD domain maps to Trp-146 to Glu-198. Basic and acidic residues-rich tracts occupy residues Lys-208–Glu-219 and His-255–Thr-271. Disordered regions lie at residues Lys-208–Asp-228 and His-255–Phe-383. Positions Ser-272–Thr-287 are enriched in low complexity. Residues Thr-340 to Val-351 are compositionally biased toward basic and acidic residues. The segment covering Asn-355–Asp-374 has biased composition (polar residues).

The chain is BSD domain-containing protein 1 (bsdc1) from Xenopus tropicalis (Western clawed frog).